Reading from the N-terminus, the 272-residue chain is MNKIFAAFKPRGLSSNAFLSTLKKKYKNKKAGYSGTLDPFAKGVLIVAFGQYTKLFRFLKKTPKTYKATLWLGVYSLSLDDQNIKEIKNIKEFDLPNLQQIIDQMQGIISYTPPQFSAKRINGTRAYELAKKGIEVNLKPCQMEVFDCKILSYNHPFLNIEITVSEGAYIRSYCELFARKLGINATLSSLERIKEGKFVYNNEKSLNVLKYINLKPNFIKDLNKLENGAKIFVEELEFHDKGDYYIETEKYFSIINIKENTVKYLLNKVEKC.

D38 acts as the Nucleophile in catalysis.

The protein belongs to the pseudouridine synthase TruB family. Type 1 subfamily.

The catalysed reaction is uridine(55) in tRNA = pseudouridine(55) in tRNA. Responsible for synthesis of pseudouridine from uracil-55 in the psi GC loop of transfer RNAs. The polypeptide is tRNA pseudouridine synthase B (Campylobacter jejuni subsp. jejuni serotype O:2 (strain ATCC 700819 / NCTC 11168)).